Consider the following 372-residue polypeptide: 4-hydroxy-3-methylbut-2-en-1-yl diphosphate synthase (flavodoxin) (372 aa).

4 residues coordinate [4Fe-4S] cluster: Cys270, Cys273, Cys305, and Glu312.

This sequence belongs to the IspG family. The cofactor is [4Fe-4S] cluster.

It catalyses the reaction (2E)-4-hydroxy-3-methylbut-2-enyl diphosphate + oxidized [flavodoxin] + H2O + 2 H(+) = 2-C-methyl-D-erythritol 2,4-cyclic diphosphate + reduced [flavodoxin]. It participates in isoprenoid biosynthesis; isopentenyl diphosphate biosynthesis via DXP pathway; isopentenyl diphosphate from 1-deoxy-D-xylulose 5-phosphate: step 5/6. Its function is as follows. Converts 2C-methyl-D-erythritol 2,4-cyclodiphosphate (ME-2,4cPP) into 1-hydroxy-2-methyl-2-(E)-butenyl 4-diphosphate. The chain is 4-hydroxy-3-methylbut-2-en-1-yl diphosphate synthase (flavodoxin) from Salmonella paratyphi B (strain ATCC BAA-1250 / SPB7).